A 275-amino-acid chain; its full sequence is Formamidopyrimidine-DNA glycosylase (275 aa).

Pro-2 (schiff-base intermediate with DNA) is an active-site residue. Glu-3 (proton donor) is an active-site residue. The active-site Proton donor; for beta-elimination activity is Lys-58. Residues His-91, Arg-109, and Arg-154 each contribute to the DNA site. An FPG-type zinc finger spans residues 240–274 (AVYERAGLPCRVCGTPIRRLVQGQRATYFCPSCQK). Arg-264 serves as the catalytic Proton donor; for delta-elimination activity.

It belongs to the FPG family. Monomer. It depends on Zn(2+) as a cofactor.

It catalyses the reaction Hydrolysis of DNA containing ring-opened 7-methylguanine residues, releasing 2,6-diamino-4-hydroxy-5-(N-methyl)formamidopyrimidine.. The catalysed reaction is 2'-deoxyribonucleotide-(2'-deoxyribose 5'-phosphate)-2'-deoxyribonucleotide-DNA = a 3'-end 2'-deoxyribonucleotide-(2,3-dehydro-2,3-deoxyribose 5'-phosphate)-DNA + a 5'-end 5'-phospho-2'-deoxyribonucleoside-DNA + H(+). Involved in base excision repair of DNA damaged by oxidation or by mutagenic agents. Acts as a DNA glycosylase that recognizes and removes damaged bases. Has a preference for oxidized purines, such as 7,8-dihydro-8-oxoguanine (8-oxoG). Has AP (apurinic/apyrimidinic) lyase activity and introduces nicks in the DNA strand. Cleaves the DNA backbone by beta-delta elimination to generate a single-strand break at the site of the removed base with both 3'- and 5'-phosphates. The chain is Formamidopyrimidine-DNA glycosylase from Bordetella pertussis (strain Tohama I / ATCC BAA-589 / NCTC 13251).